Reading from the N-terminus, the 950-residue chain is Protocadherin alpha-6 (950 aa).

The N-terminal stretch at 1 to 29 (MVFTPEDRLGKQCLLLPLLLLAAWKVGSG) is a signal peptide. Residues 30-697 (QLHYSVPEEA…GPEAALVDVN (668 aa)) are Extracellular-facing. Cadherin domains lie at 34-133 (SVPE…PPLF), 157-242 (ASDA…APTF), 243-350 (EQSE…VPEI), 351-455 (ALTS…APAF), 456-565 (AQPE…APAL), and 581-678 (VPRS…APKA). N-linked (GlcNAc...) asparagine glycosylation is found at N257, N265, N386, and N548. The chain crosses the membrane as a helical span at residues 698-718 (VYLIIAICAVSSLLVLTLLLY). Residues 719-950 (TALRCSAPPT…GNSTTDNSDQ (232 aa)) are Cytoplasmic-facing. 4 PXXP repeats span residues 799–802 (PRQP), 832–835 (PGGP), 873–876 (PGNP), and 891–894 (PGSP). The segment at 799-894 (PRQPNPDWRY…PDKFIIPGSP (96 aa)) is 4 X 4 AA repeats of P-X-X-P. The disordered stretch occupies residues 830 to 950 (AGPGGPDQQW…GNSTTDNSDQ (121 aa)). Residues 909–923 (DKSDFITFGKKEETK) show a composition bias toward basic and acidic residues.

It localises to the cell membrane. Its subcellular location is the secreted. Functionally, potential calcium-dependent cell-adhesion protein. May be involved in the establishment and maintenance of specific neuronal connections in the brain. This chain is Protocadherin alpha-6 (PCDHA6), found in Homo sapiens (Human).